Reading from the N-terminus, the 445-residue chain is Maltoporin (445 aa).

A signal peptide spans 1–24 (MITLRKLPLAVAVAAGVMSAQAMA).

The protein belongs to the porin LamB (TC 1.B.3) family. In terms of assembly, homotrimer formed of three 18-stranded antiparallel beta-barrels, containing three independent channels.

It localises to the cell outer membrane. The catalysed reaction is beta-maltose(in) = beta-maltose(out). Functionally, involved in the transport of maltose and maltodextrins. The protein is Maltoporin of Shigella flexneri.